The sequence spans 234 residues: Leucyl/phenylalanyl-tRNA--protein transferase (234 aa).

Belongs to the L/F-transferase family.

The protein localises to the cytoplasm. It catalyses the reaction N-terminal L-lysyl-[protein] + L-leucyl-tRNA(Leu) = N-terminal L-leucyl-L-lysyl-[protein] + tRNA(Leu) + H(+). The enzyme catalyses N-terminal L-arginyl-[protein] + L-leucyl-tRNA(Leu) = N-terminal L-leucyl-L-arginyl-[protein] + tRNA(Leu) + H(+). It carries out the reaction L-phenylalanyl-tRNA(Phe) + an N-terminal L-alpha-aminoacyl-[protein] = an N-terminal L-phenylalanyl-L-alpha-aminoacyl-[protein] + tRNA(Phe). Functions in the N-end rule pathway of protein degradation where it conjugates Leu, Phe and, less efficiently, Met from aminoacyl-tRNAs to the N-termini of proteins containing an N-terminal arginine or lysine. In Shigella sonnei (strain Ss046), this protein is Leucyl/phenylalanyl-tRNA--protein transferase.